The chain runs to 413 residues: ORC1-type DNA replication protein 10 (413 aa).

ATP contacts are provided by residues 63–67 (VGKTA), Y211, and R223.

Belongs to the CDC6/cdc18 family.

In terms of biological role, involved in regulation of DNA replication. The protein is ORC1-type DNA replication protein 10 (orc10) of Halobacterium salinarum (strain ATCC 700922 / JCM 11081 / NRC-1) (Halobacterium halobium).